We begin with the raw amino-acid sequence, 213 residues long: Histone H1.3 (213 aa).

Ser-1 carries the post-translational modification N-acetylserine. Over residues 1-15 the composition is skewed to low complexity; sequence SEAPAETAAPAPAEK. Residues 1–41 are disordered; that stretch reads SEAPAETAAPAPAEKSPAKKKKAAKKPGAGAAKRKAAGPPV. Position 15 is an N6-acetyllysine (Lys-15). N6-(beta-hydroxybutyryl)lysine occurs at positions 35 and 53. One can recognise an H15 domain in the interval 37 to 110; sequence AGPPVSELIT…GASGSFKLDK (74 aa). Arg-55 bears the Citrulline mark. Lys-65, Lys-86, and Lys-91 each carry N6-(beta-hydroxybutyryl)lysine. The tract at residues 92-213 is disordered; that stretch reads GTLVETKGTG…AKKTAAKKKK (122 aa). Position 105 is a phosphoserine (Ser-105). Lys-107 carries the N6-(beta-hydroxybutyryl)lysine modification. Over residues 107 to 119 the composition is skewed to basic and acidic residues; that stretch reads KLDKKAASGEAKP. Composition is skewed to basic residues over residues 120-131, 138-170, and 179-213; these read KPKKAGAAKPKK, KKPK…KVAK, and KSPK…KKKK.

Belongs to the histone H1/H5 family. H1 histones are progressively phosphorylated during the cell cycle, becoming maximally phosphorylated during late G2 phase and M phase, and being dephosphorylated sharply thereafter. Post-translationally, citrullination at Arg-55 (H1R54ci) by PADI4 takes place within the DNA-binding site of H1 and results in its displacement from chromatin and global chromatin decondensation, thereby promoting pluripotency and stem cell maintenance.

The protein localises to the nucleus. The protein resides in the chromosome. In terms of biological role, histones H1 are necessary for the condensation of nucleosome chains into higher-order structures. The sequence is that of Histone H1.3 from Oryctolagus cuniculus (Rabbit).